Reading from the N-terminus, the 417-residue chain is CinA-like protein (417 aa).

Belongs to the CinA family.

The protein is CinA-like protein of Microcystis aeruginosa (strain NIES-843 / IAM M-2473).